A 225-amino-acid chain; its full sequence is Superoxide dismutase [Mn], mitochondrial (225 aa).

The transit peptide at 1-27 (MITAITRTALPRATLRTSLATMSTIRA) directs the protein to the mitochondrion. 4 residues coordinate Mn(2+): histidine 53, histidine 101, aspartate 187, and histidine 191.

Belongs to the iron/manganese superoxide dismutase family. Mn(2+) serves as cofactor.

It is found in the mitochondrion. The protein resides in the cytoplasm. The enzyme catalyses 2 superoxide + 2 H(+) = H2O2 + O2. Destroys radicals which are normally produced within the cells and which are toxic to biological systems. Its function is as follows. Destroys mitochondrial radicals produced by oxidative stress. Functionally, destroys cytoplasmic radicals produced in low copper environments; a condition which inactivates the cytoplasmic copper-dependent superoxide dismutase SOD1. In Cryptococcus neoformans var. grubii serotype A (strain H99 / ATCC 208821 / CBS 10515 / FGSC 9487) (Filobasidiella neoformans var. grubii), this protein is Superoxide dismutase [Mn], mitochondrial.